The chain runs to 600 residues: Lamin-B2 (600 aa).

Residues 2-27 form a head region; that stretch reads SGTPIRGTPGGTPLSPTRISRLQEKE. Ser-16 is subject to Phosphoserine; by CDK1. Residues 25–381 form the IF rod domain; sequence EKEELRQLND…KLLEGEEERL (357 aa). Residues 28-64 form a coil 1A region; that stretch reads ELRQLNDRLAVYIDRVRALELENDRLLVKISEKEEVT. A coil 1B region spans residues 75–212; the sequence is YESELADARR…NVFEEEIRET (138 aa). The tract at residues 237–379 is coil 2; it reads QALEDLRNQH…YRKLLEGEEE (143 aa). Disordered regions lie at residues 377-449 and 568-600; these read EEER…QMSQ and ENEEEEDEADFGEEDLFNQQGDPRTTSRGCLVM. The tail stretch occupies residues 380–600; that stretch reads RLKLSPSPSS…RTTSRGCLVM (221 aa). Low complexity predominate over residues 383 to 410; sequence LSPSPSSRVTVSRATSSSSSSSTSLVRS. A Phosphoserine modification is found at Ser-386. The Nuclear localization signal motif lies at 414-419; the sequence is KRRRIE. The 118-residue stretch at 445 to 562 folds into the LTD domain; that stretch reads FQMSQQASAT…EEVAVRTVTK (118 aa). Residues 569–583 show a composition bias toward acidic residues; that stretch reads NEEEEDEADFGEEDL. A compositionally biased stretch (polar residues) spans 584–600; it reads FNQQGDPRTTSRGCLVM. The residue at position 597 (Cys-597) is a Cysteine methyl ester. A lipid anchor (S-farnesyl cysteine) is attached at Cys-597. Positions 598-600 are cleaved as a propeptide — removed in mature form; it reads LVM.

Belongs to the intermediate filament family. Homodimer. Lamin dimers then assemble into dimeric head-to-tail polymers. Ultimately, two head-to-tail polymers assemble laterally into a protofilament with a uniformly shaped rod of 3.5 nm in diameter. Phosphorylation plays a key role in lamin organization, subcellular localization and nuclear envelope disintegration. Phosphorylation by CDK1 at Ser-16 at the onset of mitosis drives lamin disassembly and nuclear envelope breakdown.

The protein localises to the nucleus lamina. Its subcellular location is the nucleus envelope. It is found in the nucleus. It localises to the nucleoplasm. The protein resides in the nucleus matrix. In terms of biological role, lamins are intermediate filament proteins that assemble into a filamentous meshwork, and which constitute the major components of the nuclear lamina, a fibrous layer on the nucleoplasmic side of the inner nuclear membrane. Lamins provide a framework for the nuclear envelope, bridging the nuclear envelope and chromatin. Plays an important role in nuclear assembly, chromatin organization, nuclear membrane and telomere dynamics. The sequence is that of Lamin-B2 (LMNB2) from Gallus gallus (Chicken).